A 293-amino-acid chain; its full sequence is Homoserine kinase (293 aa).

84–94 is a binding site for ATP; the sequence is PLSRGLGSSSA.

Belongs to the GHMP kinase family. Homoserine kinase subfamily.

It localises to the cytoplasm. The enzyme catalyses L-homoserine + ATP = O-phospho-L-homoserine + ADP + H(+). It functions in the pathway amino-acid biosynthesis; L-threonine biosynthesis; L-threonine from L-aspartate: step 4/5. Functionally, catalyzes the ATP-dependent phosphorylation of L-homoserine to L-homoserine phosphate. This Nitratiruptor sp. (strain SB155-2) protein is Homoserine kinase.